The following is a 368-amino-acid chain: Biotin synthase (368 aa).

One can recognise a Radical SAM core domain in the interval 46–277 (VHGDEVALCG…AAHIFVMGGR (232 aa)). Positions 64, 68, and 71 each coordinate [4Fe-4S] cluster. [2Fe-2S] cluster-binding residues include Ser-109, Cys-142, and Cys-202. The segment at 347-368 (RAAEPGGKRGLPVVGPPRGGCA) is disordered.

It belongs to the radical SAM superfamily. Biotin synthase family. As to quaternary structure, homodimer. Requires [4Fe-4S] cluster as cofactor. [2Fe-2S] cluster serves as cofactor.

The enzyme catalyses (4R,5S)-dethiobiotin + (sulfur carrier)-SH + 2 reduced [2Fe-2S]-[ferredoxin] + 2 S-adenosyl-L-methionine = (sulfur carrier)-H + biotin + 2 5'-deoxyadenosine + 2 L-methionine + 2 oxidized [2Fe-2S]-[ferredoxin]. It participates in cofactor biosynthesis; biotin biosynthesis; biotin from 7,8-diaminononanoate: step 2/2. Catalyzes the conversion of dethiobiotin (DTB) to biotin by the insertion of a sulfur atom into dethiobiotin via a radical-based mechanism. The sequence is that of Biotin synthase from Anaeromyxobacter sp. (strain Fw109-5).